The sequence spans 418 residues: Nuclear hormone receptor family member nhr-209 (418 aa).

The nuclear receptor DNA-binding region spans 43–121 (PEKCAVCKNA…VGMDSTAIRA (79 aa)). NR C4-type zinc fingers lie at residues 46 to 66 (CAVC…CNGC) and 82 to 104 (CMNH…CKGC). The NR LBD domain maps to 174 to 414 (TIPDGFEDMR…SHPPKSLFDE (241 aa)). Residues 403–414 (ECSHPPKSLFDE) form an AF-2 region.

Belongs to the nuclear hormone receptor family.

The protein localises to the nucleus. In terms of biological role, transcriptional regulator. Plays a role in modulation of lifespan and immunity. This chain is Nuclear hormone receptor family member nhr-209, found in Caenorhabditis elegans.